A 549-amino-acid polypeptide reads, in one-letter code: Cytoplasmic trehalase (549 aa).

Substrate contacts are provided by residues R168, 175 to 176, N212, 221 to 223, 292 to 294, and G324; these read WD, RSQ, and RDE. Active-site proton donor/acceptor residues include D326 and E509. E525 is a binding site for substrate.

This sequence belongs to the glycosyl hydrolase 37 family. As to quaternary structure, monomer.

It is found in the cytoplasm. It carries out the reaction alpha,alpha-trehalose + H2O = alpha-D-glucose + beta-D-glucose. The protein operates within glycan degradation; trehalose degradation; D-glucose from alpha,alpha-trehalose: step 1/1. Its function is as follows. Hydrolyzes trehalose to glucose. Could be involved, in cells returning to low osmolarity conditions, in the utilization of the accumulated cytoplasmic trehalose, which was synthesized in response to high osmolarity. This chain is Cytoplasmic trehalase, found in Escherichia coli (strain 55989 / EAEC).